Consider the following 137-residue polypeptide: Basic phospholipase A2 3 (137 aa).

Positions 1–11 are cleaved as a signal peptide; sequence LVAVCVSLLGA. The propeptide occupies 12–19; it reads ANIPPQPL. 7 disulfides stabilise this stretch: Cys-30–Cys-89, Cys-44–Cys-136, Cys-46–Cys-62, Cys-61–Cys-117, Cys-68–Cys-110, Cys-78–Cys-103, and Cys-96–Cys-108. Tyr-45, Gly-47, and Gly-49 together coordinate Ca(2+). His-65 is an active-site residue. Residue Asp-66 participates in Ca(2+) binding. Residue Asp-111 is part of the active site.

Belongs to the phospholipase A2 family. Group I subfamily. D49 sub-subfamily. As to quaternary structure, monomer, or homotrimer. Was firstly described as a trimer, but has been reinterpreted with the possibility of being a monomer. Ca(2+) serves as cofactor. Expressed by the venom gland.

Its subcellular location is the secreted. The enzyme catalyses a 1,2-diacyl-sn-glycero-3-phosphocholine + H2O = a 1-acyl-sn-glycero-3-phosphocholine + a fatty acid + H(+). Its function is as follows. Snake venom phospholipase A2 (PLA2) that shows anticoagulant and neurotoxic activities. PLA2 catalyzes the calcium-dependent hydrolysis of the 2-acyl groups in 3-sn-phosphoglycerides. The sequence is that of Basic phospholipase A2 3 from Bungarus caeruleus (Indian krait).